Consider the following 332-residue polypeptide: Probable farnesyl diphosphate synthase (332 aa).

Isopentenyl diphosphate contacts are provided by lysine 75, arginine 78, and histidine 107. Positions 114 and 120 each coordinate Mg(2+). Arginine 125 provides a ligand contact to (2E)-geranyl diphosphate. Arginine 126 is a binding site for isopentenyl diphosphate. (2E)-geranyl diphosphate contacts are provided by lysine 208, serine 209, glutamine 250, and lysine 267.

Belongs to the FPP/GGPP synthase family. Requires Mg(2+) as cofactor.

Its subcellular location is the cytoplasm. It carries out the reaction isopentenyl diphosphate + (2E)-geranyl diphosphate = (2E,6E)-farnesyl diphosphate + diphosphate. The polypeptide is Probable farnesyl diphosphate synthase (fppS) (Bradyrhizobium diazoefficiens (strain JCM 10833 / BCRC 13528 / IAM 13628 / NBRC 14792 / USDA 110)).